Here is a 417-residue protein sequence, read N- to C-terminus: Adenosylhomocysteinase (417 aa).

Substrate is bound by residues T53, D125, and E149. 150–152 (TTT) lines the NAD(+) pocket. Residues K179 and D183 each coordinate substrate. NAD(+)-binding positions include N184, 213 to 218 (GYGWVG), E236, N271, 292 to 294 (AGH), and N339.

Belongs to the adenosylhomocysteinase family. NAD(+) serves as cofactor.

The protein localises to the cytoplasm. The enzyme catalyses S-adenosyl-L-homocysteine + H2O = L-homocysteine + adenosine. The protein operates within amino-acid biosynthesis; L-homocysteine biosynthesis; L-homocysteine from S-adenosyl-L-homocysteine: step 1/1. May play a key role in the regulation of the intracellular concentration of adenosylhomocysteine. This is Adenosylhomocysteinase from Saccharolobus solfataricus (strain ATCC 35092 / DSM 1617 / JCM 11322 / P2) (Sulfolobus solfataricus).